A 373-amino-acid chain; its full sequence is Probable G-protein coupled receptor 173 (373 aa).

At Met-1–Leu-26 the chain is on the extracellular side. Asn-3 is a glycosylation site (N-linked (GlcNAc...) asparagine). Residues Val-27–Val-47 form a helical membrane-spanning segment. At Leu-48 to Tyr-59 the chain is on the cytoplasmic side. The helical transmembrane segment at Phe-60 to Leu-80 threads the bilayer. Topologically, residues Ala-81 to Lys-97 are extracellular. Residues Cys-96 and Cys-174 are joined by a disulfide bond. Residues Ile-98–Ser-118 traverse the membrane as a helical segment. At Val-119 to Thr-139 the chain is on the cytoplasmic side. Residues Cys-140–Phe-160 traverse the membrane as a helical segment. The Extracellular segment spans residues Asp-161–Gly-188. The N-linked (GlcNAc...) asparagine glycan is linked to Asn-184. A helical membrane pass occupies residues Phe-189 to Leu-209. The Cytoplasmic portion of the chain corresponds to Phe-210–Met-287. Residues Phe-288–Trp-308 form a helical membrane-spanning segment. The Extracellular portion of the chain corresponds to Arg-309–Leu-322. A helical transmembrane segment spans residues Ala-323–Leu-343. Residues Asn-344–Met-373 lie on the Cytoplasmic side of the membrane.

The protein belongs to the G-protein coupled receptor 1 family.

The protein resides in the cell membrane. Its function is as follows. Is a receptor for the SMIM20 derived peptides Phoenixin-14 and Phoenixin-20. It mediates the Phoenixin-14 and Phoenixin-20 augmentation of gonadotropin-releasing hormone (GNRH) signaling in the hypothalamus and pituitary gland. In the ovary, it mediates the effects of Phoenixin-14 and Phoenixin-20 induced granulosa cell proliferation during follicular growth. This chain is Probable G-protein coupled receptor 173 (GPR173), found in Bos taurus (Bovine).